A 185-amino-acid polypeptide reads, in one-letter code: Elongation factor P (185 aa).

Belongs to the elongation factor P family.

It localises to the cytoplasm. It participates in protein biosynthesis; polypeptide chain elongation. In terms of biological role, involved in peptide bond synthesis. Stimulates efficient translation and peptide-bond synthesis on native or reconstituted 70S ribosomes in vitro. Probably functions indirectly by altering the affinity of the ribosome for aminoacyl-tRNA, thus increasing their reactivity as acceptors for peptidyl transferase. This is Elongation factor P from Bordetella petrii (strain ATCC BAA-461 / DSM 12804 / CCUG 43448).